Consider the following 205-residue polypeptide: Holliday junction branch migration complex subunit RuvA (205 aa).

Residues 1–64 are domain I; it reads MIGRLRGIIL…EDAQLLFGFN (64 aa). The interval 65-142 is domain II; that stretch reads DKQERALFRE…KGLSGDLFNP (78 aa). Residues 143–156 are flexible linker; the sequence is VSDIPLASPASAES. The interval 157-205 is domain III; that stretch reads RASDPEAEAAAALVALGYKPQEASRMISKIARPEADCETLIRDALRAAL.

It belongs to the RuvA family. As to quaternary structure, homotetramer. Forms an RuvA(8)-RuvB(12)-Holliday junction (HJ) complex. HJ DNA is sandwiched between 2 RuvA tetramers; dsDNA enters through RuvA and exits via RuvB. An RuvB hexamer assembles on each DNA strand where it exits the tetramer. Each RuvB hexamer is contacted by two RuvA subunits (via domain III) on 2 adjacent RuvB subunits; this complex drives branch migration. In the full resolvosome a probable DNA-RuvA(4)-RuvB(12)-RuvC(2) complex forms which resolves the HJ.

It localises to the cytoplasm. The RuvA-RuvB-RuvC complex processes Holliday junction (HJ) DNA during genetic recombination and DNA repair, while the RuvA-RuvB complex plays an important role in the rescue of blocked DNA replication forks via replication fork reversal (RFR). RuvA specifically binds to HJ cruciform DNA, conferring on it an open structure. The RuvB hexamer acts as an ATP-dependent pump, pulling dsDNA into and through the RuvAB complex. HJ branch migration allows RuvC to scan DNA until it finds its consensus sequence, where it cleaves and resolves the cruciform DNA. In Pectobacterium carotovorum subsp. carotovorum (strain PC1), this protein is Holliday junction branch migration complex subunit RuvA.